The sequence spans 298 residues: 4-diphosphocytidyl-2-C-methyl-D-erythritol kinase (298 aa).

K11 is a catalytic residue. 94 to 104 (PMGGGLGGGSS) contacts ATP. Residue D136 is part of the active site.

Belongs to the GHMP kinase family. IspE subfamily.

The enzyme catalyses 4-CDP-2-C-methyl-D-erythritol + ATP = 4-CDP-2-C-methyl-D-erythritol 2-phosphate + ADP + H(+). It participates in isoprenoid biosynthesis; isopentenyl diphosphate biosynthesis via DXP pathway; isopentenyl diphosphate from 1-deoxy-D-xylulose 5-phosphate: step 3/6. In terms of biological role, catalyzes the phosphorylation of the position 2 hydroxy group of 4-diphosphocytidyl-2C-methyl-D-erythritol. This chain is 4-diphosphocytidyl-2-C-methyl-D-erythritol kinase, found in Chromohalobacter salexigens (strain ATCC BAA-138 / DSM 3043 / CIP 106854 / NCIMB 13768 / 1H11).